Here is a 421-residue protein sequence, read N- to C-terminus: Gamma-glutamyl phosphate reductase (421 aa).

The protein belongs to the gamma-glutamyl phosphate reductase family.

It is found in the cytoplasm. The enzyme catalyses L-glutamate 5-semialdehyde + phosphate + NADP(+) = L-glutamyl 5-phosphate + NADPH + H(+). The protein operates within amino-acid biosynthesis; L-proline biosynthesis; L-glutamate 5-semialdehyde from L-glutamate: step 2/2. In terms of biological role, catalyzes the NADPH-dependent reduction of L-glutamate 5-phosphate into L-glutamate 5-semialdehyde and phosphate. The product spontaneously undergoes cyclization to form 1-pyrroline-5-carboxylate. This Brucella suis biovar 1 (strain 1330) protein is Gamma-glutamyl phosphate reductase.